A 319-amino-acid polypeptide reads, in one-letter code: Transcription factor STKL2 (319 aa).

The tract at residues 1–119 (MAPLESPATA…NKKANPQRVW (119 aa)) is disordered. Basic and acidic residues predominate over residues 21 to 34 (EIFKSSSEESKPKD). Residues 38–55 (VPSSKTLKSPSAAVNSKT) are compositionally biased toward polar residues. Positions 89 to 112 (RAGEGSTSRDMHVKRVKKEDDNKK) are enriched in basic and acidic residues.

The protein belongs to the GeBP family. In terms of tissue distribution, expressed strongly in leaves and flowers, weakly in roots, and very weakly in stems.

Its subcellular location is the nucleus. Transcription repressor that binds DNA in a sequence-specific manner, 5'-GCCT-3', to regulate the expression of PGR. Acts as a modulatory component for the glucose-triggered developmental leaf growth process. The polypeptide is Transcription factor STKL2 (Arabidopsis thaliana (Mouse-ear cress)).